An 818-amino-acid polypeptide reads, in one-letter code: Response regulator SSK1 (818 aa).

One can recognise a Response regulatory domain in the interval 611 to 769; that stretch reads NVLIVEDNPI…WLERKVMEWG (159 aa). The residue at position 660 (aspartate 660) is a 4-aspartylphosphate.

The protein belongs to the SSK1 family.

Its subcellular location is the cytoplasm. In terms of biological role, two-domain response regulator protein in the two-component signal transduction system of the HOG1 pathway. Modulates stress response, melanin biosynthesis and virulence via its regulation of the phosphorylation of HOG1. This is Response regulator SSK1 from Verticillium dahliae (strain VdLs.17 / ATCC MYA-4575 / FGSC 10137) (Verticillium wilt).